The following is a 265-amino-acid chain: PBSX phage terminase small subunit (265 aa).

Positions 241–265 are disordered; that stretch reads KQKAEKTDDSQEPIEIMIKRKERKS.

This sequence to B.subtilis YqaS and B.subtilis phage SPP1 terminase small subunit. In terms of assembly, dimer of a small and a large subunit.

Functions as a terminase. In Bacillus subtilis (strain 168), this protein is PBSX phage terminase small subunit (xtmA).